Reading from the N-terminus, the 300-residue chain is 3-methyl-2-oxobutanoate hydroxymethyltransferase (300 aa).

Mg(2+) is bound by residues Asp-75 and Asp-118. 3-methyl-2-oxobutanoate is bound by residues 75–76 (DS), Asp-118, and Lys-147. Glu-149 lines the Mg(2+) pocket. The active-site Proton acceptor is the Glu-216.

This sequence belongs to the PanB family. Homodecamer; pentamer of dimers. Mg(2+) is required as a cofactor.

The protein resides in the cytoplasm. It carries out the reaction 3-methyl-2-oxobutanoate + (6R)-5,10-methylene-5,6,7,8-tetrahydrofolate + H2O = 2-dehydropantoate + (6S)-5,6,7,8-tetrahydrofolate. It functions in the pathway cofactor biosynthesis; (R)-pantothenate biosynthesis; (R)-pantoate from 3-methyl-2-oxobutanoate: step 1/2. Catalyzes the reversible reaction in which hydroxymethyl group from 5,10-methylenetetrahydrofolate is transferred onto alpha-ketoisovalerate to form ketopantoate. The protein is 3-methyl-2-oxobutanoate hydroxymethyltransferase of Verminephrobacter eiseniae (strain EF01-2).